The following is a 312-amino-acid chain: NADPH-dependent alpha-keto amide reductase (312 aa).

Residues G25, T26, R27, and D59 each contribute to the NADPH site. Active-site proton donor residues include Y64 and H122. S123 carries the phosphoserine modification. 10 residues coordinate NADPH: S157, Q179, S208, L210, T257, T258, S259, S260, K261, and R264.

This sequence belongs to the aldo/keto reductase family. Monomer. Post-translationally, the N-terminus is blocked.

It is found in the cytoplasm. The protein localises to the nucleus. In terms of biological role, reduces aromatic alpha-keto amides, aliphatic and aromatic alpha-keto esters, but not beta-keto esters. This chain is NADPH-dependent alpha-keto amide reductase, found in Saccharomyces cerevisiae (strain ATCC 204508 / S288c) (Baker's yeast).